Reading from the N-terminus, the 67-residue chain is MANQNSSNDLLVPGAAQAIDQMKLEIASEFGVNLGADTTSRANGSVGGEITKRLVSFAQQQMGGRVQ.

The protein belongs to the alpha/beta-type SASP family.

SASP are bound to spore DNA. They are double-stranded DNA-binding proteins that cause DNA to change to an a-like conformation. They protect the DNA backbone from chemical and enzymatic cleavage and are thus involved in dormant spore's high resistance to UV light. This Bacillus subtilis (strain 168) protein is Small, acid-soluble spore protein B (sspB).